The chain runs to 223 residues: Cytidylate kinase (223 aa).

10–18 (GPASSGKST) contacts ATP.

The protein belongs to the cytidylate kinase family. Type 1 subfamily.

The protein localises to the cytoplasm. The enzyme catalyses CMP + ATP = CDP + ADP. It carries out the reaction dCMP + ATP = dCDP + ADP. The sequence is that of Cytidylate kinase from Streptococcus pneumoniae serotype 4 (strain ATCC BAA-334 / TIGR4).